We begin with the raw amino-acid sequence, 131 residues long: Large-conductance mechanosensitive channel (131 aa).

A run of 3 helical transmembrane segments spans residues 8 to 28 (FAIRGNVIDLAVGVIIGGAFG), 30 to 50 (IVSSLVNDIIMPLVGLLLGGI), and 67 to 87 (GAFIQTVVDFLIIAFSIFLFV).

This sequence belongs to the MscL family. As to quaternary structure, homopentamer.

It is found in the cell membrane. Functionally, channel that opens in response to stretch forces in the membrane lipid bilayer. May participate in the regulation of osmotic pressure changes within the cell. This Geobacillus thermodenitrificans (strain NG80-2) protein is Large-conductance mechanosensitive channel.